We begin with the raw amino-acid sequence, 391 residues long: Probable sugar efflux transporter (391 aa).

12 helical membrane-spanning segments follow: residues Val-16–Leu-36, Val-51–Leu-71, Leu-82–Phe-102, Trp-103–Thr-123, Gln-138–Gly-158, Thr-170–Pro-190, Pro-210–Tyr-230, Ile-247–Gly-267, Phe-277–Asn-297, Trp-300–Leu-320, Ile-338–Ile-358, and Leu-361–Leu-381.

The protein belongs to the major facilitator superfamily. SotB (TC 2.A.1.2) family.

It is found in the cell inner membrane. Involved in the efflux of sugars. The physiological role may be the reduction of the intracellular concentration of toxic sugars or sugar metabolites. This chain is Probable sugar efflux transporter, found in Helicobacter pylori (strain P12).